We begin with the raw amino-acid sequence, 321 residues long: Ribose-phosphate pyrophosphokinase 1 (321 aa).

Residues aspartate 131, histidine 133, aspartate 142, and aspartate 146 each coordinate Mg(2+).

Belongs to the ribose-phosphate pyrophosphokinase family.

The catalysed reaction is D-ribose 5-phosphate + ATP = 5-phospho-alpha-D-ribose 1-diphosphate + AMP + H(+). This is Ribose-phosphate pyrophosphokinase 1 (PRS1) from Candida albicans (Yeast).